The primary structure comprises 404 residues: V-set and immunoglobulin domain-containing protein 1 (404 aa).

A signal peptide spans 1-22; that stretch reads MMVFAFWKVFLILNCLAGQVNM. Positions 23-133 constitute an Ig-like V-type domain; it reads VQVTIPDTFV…DFFGKNQGIL (111 aa). Over 23–233 the chain is Extracellular; it reads VQVTIPDTFV…EIDLTSSDPE (211 aa). An N-linked (GlcNAc...) asparagine glycan is attached at N39. 2 disulfide bridges follow: C44/C117 and C162/C212. The region spanning 141–228 is the Ig-like C2-type domain; the sequence is PSKPFCSIQG…GNSSCEIDLT (88 aa). Residues N201 and N220 are each glycosylated (N-linked (GlcNAc...) asparagine). The helical transmembrane segment at 234–254 threads the bilayer; the sequence is VGIIIGALVGALTGAAIIICV. Topologically, residues 255-404 are cytoplasmic; that stretch reads VYFARNKVKS…REEEKETVKA (150 aa). Disordered stretches follow at residues 266-285 and 298-404; these read QKNL…HHSR and EGTL…TVKA. S271 and S272 each carry phosphoserine. Positions 301–314 are enriched in polar residues; sequence LPSSIHASHNTEPT. The span at 357–383 shows a compositional bias: acidic residues; that stretch reads MELEPETEPEPEPEPEPQPELESELEP. Positions 393–404 are enriched in basic and acidic residues; the sequence is PMREEEKETVKA.

It is found in the membrane. This Rattus norvegicus (Rat) protein is V-set and immunoglobulin domain-containing protein 1 (Vsig1).